The sequence spans 94 residues: Small ribosomal subunit protein bS18 (94 aa).

This sequence belongs to the bacterial ribosomal protein bS18 family. Part of the 30S ribosomal subunit. Forms a tight heterodimer with protein bS6.

Binds as a heterodimer with protein bS6 to the central domain of the 16S rRNA, where it helps stabilize the platform of the 30S subunit. The protein is Small ribosomal subunit protein bS18 of Leptospira biflexa serovar Patoc (strain Patoc 1 / Ames).